Consider the following 1742-residue polypeptide: Unconventional myosin-Vc (1742 aa).

A2 is subject to N-acetylalanine. The Myosin N-terminal SH3-like domain occupies 8–62; that stretch reads TQYNRVWIPDPEEVWKSAEIAKDYRVGDKVLRLLLEDGTELDYSVNPESLPPLRN. Positions 67-753 constitute a Myosin motor domain; the sequence is VGENDLTALS…QVAYLEKLRL (687 aa). Position 161 to 168 (161 to 168) interacts with ATP; that stretch reads GESGAGKT. The tract at residues 632–654 is actin-binding; sequence LYLLMETLNATTPHYVRCIKPND. 5 consecutive IQ domains span residues 756 to 779, 780 to 806, 807 to 829, 830 to 854, and 855 to 884; these read LRQSCVMVQKHMRGWLQRKKFLRE, RRAALIIQQYFRGQQTVRKAITAVALK, EAWAAIIIQKHCRGYLVRSLYQL, IRMATITMQAYSRGFLARRRYRKML, and EEHKAVILQKYARAWLARRRFQSIRRFVLN. The stretch at 884 to 1351 forms a coiled coil; the sequence is NIQLTYRVQR…SKTIGKANDV (468 aa). A Dilute domain is found at 1421–1697; it reads NSTINGIKQV…VRKVQALLNS (277 aa).

This sequence belongs to the TRAFAC class myosin-kinesin ATPase superfamily. Myosin family. Expressed chiefly in non-neuronal tissues. Particularly abundant in epithelial and glandular tissues including pancreas, prostate, mammary, stomach, colon and lung.

Its function is as follows. May be involved in transferrin trafficking. Likely to power actin-based membrane trafficking in many physiologically crucial tissues. The sequence is that of Unconventional myosin-Vc (MYO5C) from Homo sapiens (Human).